The sequence spans 118 residues: Holo-[acyl-carrier-protein] synthase (118 aa).

Positions 8 and 58 each coordinate Mg(2+).

Belongs to the P-Pant transferase superfamily. AcpS family. Mg(2+) is required as a cofactor.

Its subcellular location is the cytoplasm. The catalysed reaction is apo-[ACP] + CoA = holo-[ACP] + adenosine 3',5'-bisphosphate + H(+). Its function is as follows. Transfers the 4'-phosphopantetheine moiety from coenzyme A to a Ser of acyl-carrier-protein. The chain is Holo-[acyl-carrier-protein] synthase from Lactobacillus helveticus (strain DPC 4571).